Reading from the N-terminus, the 254-residue chain is C-X-C motif chemokine 16 (254 aa).

An N-terminal signal peptide occupies residues 1-29 (MGRDLRPGSRVLLLLLLLLLVYLTQPGNG). Topologically, residues 30 to 205 (NEGSVTGSCY…AGPTARTSAT (176 aa)) are extracellular. A chemokine region spans residues 32-107 (GSVTGSCYCG…DLKECGHAYS (76 aa)). 2 disulfide bridges follow: Cys-38/Cys-68 and Cys-40/Cys-82. The tract at residues 146–165 (QSTQRPTLPVGSLSSDKELT) is disordered. N-linked (GlcNAc...) asparagine glycosylation is present at Asn-168. The segment at 178 to 200 (SLAAGPEAGENQKQPEKNAGPTA) is disordered. Residues 206-226 (VPVLCLLAIIFILTAALSYVL) form a helical membrane-spanning segment. Residues 227-254 (CKRRRGQSPQSSPDLPVHYIPVAPDSNT) lie on the Cytoplasmic side of the membrane. Residues 231-254 (RGQSPQSSPDLPVHYIPVAPDSNT) form a disordered region.

It belongs to the intercrine alpha (chemokine CxC) family. Glycosylated. In terms of tissue distribution, expressed in T-cell areas. Expressed in spleen, lymph nodes, lung, kidney, small intestine and thymus. Weak expression in heart and liver and no expression in brain and bone marrow.

The protein resides in the cell membrane. It localises to the secreted. Acts as a scavenger receptor on macrophages, which specifically binds to OxLDL (oxidized low density lipoprotein), suggesting that it may be involved in pathophysiology such as atherogenesis. Induces a strong chemotactic response. Induces calcium mobilization. Binds to CXCR6/Bonzo. In Homo sapiens (Human), this protein is C-X-C motif chemokine 16 (CXCL16).